The primary structure comprises 253 residues: Ditrans,polycis-undecaprenyl-diphosphate synthase ((2E,6E)-farnesyl-diphosphate specific) (253 aa).

Residue Asp-25 is part of the active site. Asp-25 provides a ligand contact to Mg(2+). Residues 26 to 29, Trp-30, Arg-38, His-42, and 70 to 72 each bind substrate; these read GNGR and SSE. The active-site Proton acceptor is the Asn-73. Substrate-binding residues include Trp-74, Arg-76, and Arg-193. His-198 serves as a coordination point for Mg(2+). Residue 199–201 coordinates substrate; it reads RIS. Residue Glu-212 coordinates Mg(2+).

It belongs to the UPP synthase family. Homodimer. The cofactor is Mg(2+).

It carries out the reaction 8 isopentenyl diphosphate + (2E,6E)-farnesyl diphosphate = di-trans,octa-cis-undecaprenyl diphosphate + 8 diphosphate. Catalyzes the sequential condensation of isopentenyl diphosphate (IPP) with (2E,6E)-farnesyl diphosphate (E,E-FPP) to yield (2Z,6Z,10Z,14Z,18Z,22Z,26Z,30Z,34E,38E)-undecaprenyl diphosphate (di-trans,octa-cis-UPP). UPP is the precursor of glycosyl carrier lipid in the biosynthesis of bacterial cell wall polysaccharide components such as peptidoglycan and lipopolysaccharide. The polypeptide is Ditrans,polycis-undecaprenyl-diphosphate synthase ((2E,6E)-farnesyl-diphosphate specific) (Pectobacterium atrosepticum (strain SCRI 1043 / ATCC BAA-672) (Erwinia carotovora subsp. atroseptica)).